Reading from the N-terminus, the 450-residue chain is Probable malate:quinone oxidoreductase (450 aa).

It belongs to the MQO family. It depends on FAD as a cofactor.

The enzyme catalyses (S)-malate + a quinone = a quinol + oxaloacetate. It participates in carbohydrate metabolism; tricarboxylic acid cycle; oxaloacetate from (S)-malate (quinone route): step 1/1. The chain is Probable malate:quinone oxidoreductase from Helicobacter pylori (strain P12).